Here is a 955-residue protein sequence, read N- to C-terminus: 2-oxoglutarate dehydrogenase E1 component (955 aa).

Belongs to the alpha-ketoglutarate dehydrogenase family. In terms of assembly, homodimer. Part of the 2-oxoglutarate dehydrogenase (OGDH) complex composed of E1 (2-oxoglutarate dehydrogenase), E2 (dihydrolipoamide succinyltransferase) and E3 (dihydrolipoamide dehydrogenase); the complex contains multiple copies of the three enzymatic components (E1, E2 and E3). Thiamine diphosphate serves as cofactor.

The enzyme catalyses N(6)-[(R)-lipoyl]-L-lysyl-[protein] + 2-oxoglutarate + H(+) = N(6)-[(R)-S(8)-succinyldihydrolipoyl]-L-lysyl-[protein] + CO2. Its function is as follows. E1 component of the 2-oxoglutarate dehydrogenase (OGDH) complex which catalyzes the decarboxylation of 2-oxoglutarate, the first step in the conversion of 2-oxoglutarate to succinyl-CoA and CO(2). The sequence is that of 2-oxoglutarate dehydrogenase E1 component from Bacillus cereus (strain ATCC 10987 / NRS 248).